The sequence spans 1630 residues: Merozoite surface protein 1 (1630 aa).

Positions 1-19 are cleaved as a signal peptide; sequence MKIIFFLCSFLFFIINTQC. Residues 60–113 form a disordered region; the sequence is TKGASAQSGTSGTSGTSGPSGPSGTSPSSRSNTLPRSNTSSGASPPADASDSDA. Positions 67-84 are tripeptide SG(TP) repeat; that stretch reads SGTSGTSGTSGPSGPSGT. Positions 67 to 88 are enriched in low complexity; sequence SGTSGTSGTSGPSGPSGTSPSS. The segment covering 89-98 has biased composition (polar residues); that stretch reads RSNTLPRSNT. An N-linked (GlcNAc...) asparagine glycan is attached at asparagine 97. The segment covering 99 to 108 has biased composition (low complexity); that stretch reads SSGASPPADA. A glycan (N-linked (GlcNAc...) asparagine) is linked at asparagine 259. The tract at residues 680 to 755 is disordered; sequence KKNIKTEGQS…VPTPPAPVNN (76 aa). 2 stretches are compositionally biased toward polar residues: residues 685-695 and 702-713; these read TEGQSDNSEPS and GQATTKPGQQAG. A compositionally biased stretch (low complexity) spans 721-732; sequence VQAQAQEQKQAQ. Residues asparagine 755, asparagine 759, asparagine 774, and asparagine 835 are each glycosylated (N-linked (GlcNAc...) asparagine). The disordered stretch occupies residues 884–906; the sequence is SMQPLSLTPQDKPEVSANDDTSH. Asparagine 911, asparagine 955, asparagine 1049, asparagine 1156, and asparagine 1165 each carry an N-linked (GlcNAc...) asparagine glycan. Residues 993-1107 form a required for binding to host erythrocyte cell membrane region; the sequence is QLSFDLYNKY…EESIQTEDNY (115 aa). Positions 1190 to 1203 are enriched in polar residues; the sequence is VSESGSDTLEQSQP. The disordered stretch occupies residues 1190–1220; sequence VSESGSDTLEQSQPKKPASTHVGAESNTITT. Asparagine 1436 and asparagine 1517 each carry an N-linked (GlcNAc...) asparagine glycan. EGF-like domains follow at residues 1521 to 1561 and 1562 to 1610; these read HQCV…VENP and NPTC…FCSS. Disulfide bonds link cysteine 1523–cysteine 1534, cysteine 1528–cysteine 1544, cysteine 1546–cysteine 1557, cysteine 1565–cysteine 1578, cysteine 1572–cysteine 1592, and cysteine 1594–cysteine 1608. Serine 1609 carries the GPI-anchor amidated serine lipid modification. The propeptide at 1610-1630 is removed in mature form; that stretch reads SSNFLGISFLLILMLILYSFI.

Forms a complex composed of subunits p83, p30, p38, and p42 which remain non-covalently associated; the complex is formed at the merozoite surface prior to egress from host erythrocytes. Forms a complex composed of processed MSP1 subunits, MSP6 subunit p36 and MSP7; the complex is formed at the merozoite surface prior to egress from host erythrocytes. Within the complex, interacts (via subunit p38) with MSP6 subunit p36 and (via subunits p83, p30 and p38) with MSP7 (via subunit p22). Forms a complex composed of MSP1, MSP6, DBLMSP1 and DBLMSP2. Within the complex, interacts (via subunit p38) with DBLMSP1 and DBLMSP2. Forms a complex composed of MSP1, and rhoptry proteins RhopH3, RAP1 and CLAG9/RhopH3. Within the complex, interacts (via subunits p42 and p19) with RhopH3 (via C-terminus). Forms a complex composed of MSP1, MSP6, MSP7, MSP9 and MSP3; within the complex, MSP6 and MSP9 mediate the binding to the host erythrocyte. Interacts (via subunits p19 and p42) with MSP9; the interaction is direct; MSP1 subunits p19 or p42, and MSP9 form a co-ligand complex that interacts with host SLC4A1/Band 3 protein. May interact with PFD6. Interacts with host spectrin. In terms of assembly, interacts with host glycophorin GYPA in a sialic acid-independent manner. As to quaternary structure, interacts with host proinflammatory cytokine S100P; the interaction blocks S100P inflammatory and chemotactic activities. Interacts with host SLC4A1/Band 3 (via 5ABC region) on the host erythrocyte surface in a sialic acid-independent manner. In terms of processing, the p190 precursor is cleaved by SUB1 prior to merozoite egress into 4 subunits p83, p30, p38, and p42 which remain non-covalently associated. SUB1-mediated proteolytic cleavage occurs in an orderly manner; the first cleavage occurs at the p83/p30 site, followed by cleavage at the p30/p38 site, the last cleavage occurs at the p38/p42 site. The order of cleavage is essential for parasite viability. SUB1-mediated processing is essential for merozoite egress. In a second processing step during erythrocyte invasion, p42 is cleaved by SUB2 into p33 and p19; the latter remains attached to the merozoite surface via its GPI-anchor and stays on the surface during the subsequent ring stage.

Its subcellular location is the cell membrane. The protein resides in the secreted. The protein localises to the vacuole membrane. In terms of biological role, during the asexual blood stage, involved in merozoite egress from host erythrocytes possibly via its interaction with the host cytoskeleton protein spectrin resulting in the destabilization of the host cytoskeleton and thus leading to erythrocyte cell membrane rupture. Involved in the binding to host erythrocytes and is required for host erythrocyte invasion. By binding to host proinflammatory cytokine S100P may interfere with host immune responses. Its function is as follows. Involved in merozoite invasion of host erythrocytes. May play a role in the biogenesis and/or function of the food vacuole during the intraerythrocytic development. The polypeptide is Merozoite surface protein 1 (Plasmodium falciparum (isolate K1 / Thailand)).